A 563-amino-acid chain; its full sequence is Tripeptidyl-peptidase 1 (563 aa).

A signal peptide spans 1–19 (MGLQARFLGLLALVIAGKC). The propeptide at 20 to 195 (THSPEPDQRW…PEPQGVGPVG (176 aa)) is removed in mature form. A disulfide bond links C111 and C122. The Peptidase S53 domain occupies 199 to 563 (GVTPSVLRQR…PALLKTLLNP (365 aa)). Residues N210 and N222 are each glycosylated (N-linked (GlcNAc...) asparagine). Residues E272 and D276 each act as charge relay system in the active site. N286, N313, and N443 each carry an N-linked (GlcNAc...) asparagine glycan. Disulfide bonds link C365–C526 and C522–C537. The Charge relay system role is filled by S475. Ca(2+)-binding residues include D517 and V518. Residues G539, G541, and D543 each coordinate Ca(2+).

In terms of assembly, monomer. Interacts with CLN5. Interacts with CLN3. It depends on Ca(2+) as a cofactor. Activated by autocatalytic proteolytical processing upon acidification. N-glycosylation is required for processing and activity.

Its subcellular location is the lysosome. It is found in the melanosome. The catalysed reaction is Release of an N-terminal tripeptide from a polypeptide, but also has endopeptidase activity.. Its function is as follows. Lysosomal serine protease with tripeptidyl-peptidase I activity. May act as a non-specific lysosomal peptidase which generates tripeptides from the breakdown products produced by lysosomal proteinases. Requires substrates with an unsubstituted N-terminus. The protein is Tripeptidyl-peptidase 1 (Tpp1) of Rattus norvegicus (Rat).